We begin with the raw amino-acid sequence, 344 residues long: Leucine-rich repeat-containing protein 75A (344 aa).

The segment at 1-25 is disordered; that stretch reads MGTRQTKGSLAERASPGAAPGPRRE. The span at 11–21 shows a compositional bias: low complexity; sequence AERASPGAAPG. 2 LRR repeats span residues 204 to 217 and 229 to 242; these read VDSV…LTDD and LPRL…GNRL. A disordered region spans residues 295-344; that stretch reads LPTILELGEGPGSGEEVREGTVGQEDPGGGPVAPAEDHHEGKETVAAAQT.

Belongs to the LRRC75 family.

This Homo sapiens (Human) protein is Leucine-rich repeat-containing protein 75A (LRRC75A).